The following is a 172-amino-acid chain: MAGALRKTMIYLGLADGDEHYEPQPEGKQTRPAQKNEEYVDQEIRHTEPASAHQASEDEYRAPVTPIKRAASNRDDSSGLRQITTVHPRSYNDAKVIGESFRDGIPVIMNVTDMGEGDAKRLVDFSAGLVFGLHGSIERVTNKVFLLSPVFVEVIGDDKKASENQASFFNQS.

The interval 16–78 (DGDEHYEPQP…RAASNRDDSS (63 aa)) is disordered. The span at 17–48 (GDEHYEPQPEGKQTRPAQKNEEYVDQEIRHTE) shows a compositional bias: basic and acidic residues.

This sequence belongs to the SepF family. As to quaternary structure, homodimer. Interacts with FtsZ.

It is found in the cytoplasm. Cell division protein that is part of the divisome complex and is recruited early to the Z-ring. Probably stimulates Z-ring formation, perhaps through the cross-linking of FtsZ protofilaments. Its function overlaps with FtsA. In Renibacterium salmoninarum (strain ATCC 33209 / DSM 20767 / JCM 11484 / NBRC 15589 / NCIMB 2235), this protein is Cell division protein SepF.